We begin with the raw amino-acid sequence, 198 residues long: NAD(P)H dehydrogenase (quinone) (198 aa).

Residues 4 to 189 (VLVLYYSMYG…SIARYQGEYV (186 aa)) form the Flavodoxin-like domain. Residues 10-15 (SMYGHI) and 78-80 (TRF) each bind FMN. Y12 is a binding site for NAD(+). Residue W98 coordinates substrate. FMN contacts are provided by residues 113 to 118 (STGTGG) and H133.

It belongs to the WrbA family. It depends on FMN as a cofactor.

The enzyme catalyses a quinone + NADH + H(+) = a quinol + NAD(+). It catalyses the reaction a quinone + NADPH + H(+) = a quinol + NADP(+). This chain is NAD(P)H dehydrogenase (quinone), found in Escherichia coli O157:H7.